The chain runs to 76 residues: MATFDEVKEVIVDKLGVDADKVTPEARFVEDLGADSLETVELIMGLEDKFGISISDEDAEKIRTVQAAVDYIGSKQ.

The 76-residue stretch at 1–76 (MATFDEVKEV…AAVDYIGSKQ (76 aa)) folds into the Carrier domain. The residue at position 36 (Ser36) is an O-(pantetheine 4'-phosphoryl)serine.

This sequence belongs to the acyl carrier protein (ACP) family. Post-translationally, 4'-phosphopantetheine is transferred from CoA to a specific serine of apo-ACP by AcpS. This modification is essential for activity because fatty acids are bound in thioester linkage to the sulfhydryl of the prosthetic group.

The protein resides in the cytoplasm. It participates in lipid metabolism; fatty acid biosynthesis. Functionally, carrier of the growing fatty acid chain in fatty acid biosynthesis. The protein is Acyl carrier protein of Deinococcus geothermalis (strain DSM 11300 / CIP 105573 / AG-3a).